The following is a 268-amino-acid chain: Hydroxyethylthiazole kinase (268 aa).

Met-45 contributes to the substrate binding site. Residues Arg-121 and Thr-167 each contribute to the ATP site. Residue Gly-194 participates in substrate binding.

This sequence belongs to the Thz kinase family. Requires Mg(2+) as cofactor.

It carries out the reaction 5-(2-hydroxyethyl)-4-methylthiazole + ATP = 4-methyl-5-(2-phosphooxyethyl)-thiazole + ADP + H(+). The protein operates within cofactor biosynthesis; thiamine diphosphate biosynthesis; 4-methyl-5-(2-phosphoethyl)-thiazole from 5-(2-hydroxyethyl)-4-methylthiazole: step 1/1. Functionally, catalyzes the phosphorylation of the hydroxyl group of 4-methyl-5-beta-hydroxyethylthiazole (THZ). The sequence is that of Hydroxyethylthiazole kinase from Bacillus cereus (strain ZK / E33L).